We begin with the raw amino-acid sequence, 159 residues long: MQLVIVAVGHKMPGWIETGFSEYAKRMPPELRIELREVKPETRSSSNNAATVMQREAARIEAVLGSLSKQCRIVALDERGRDFTTVQLAAQLTDWQREGGDVAFLIGGADGLDPALKARASTLIRLSSLTLPHGMVRVLLAEQLYRAWSVTQNHPYHRA.

Residues L76, G107, and 126–131 (LSSLTL) contribute to the S-adenosyl-L-methionine site.

This sequence belongs to the RNA methyltransferase RlmH family. As to quaternary structure, homodimer.

The protein resides in the cytoplasm. It catalyses the reaction pseudouridine(1915) in 23S rRNA + S-adenosyl-L-methionine = N(3)-methylpseudouridine(1915) in 23S rRNA + S-adenosyl-L-homocysteine + H(+). In terms of biological role, specifically methylates the pseudouridine at position 1915 (m3Psi1915) in 23S rRNA. In Cupriavidus necator (strain ATCC 17699 / DSM 428 / KCTC 22496 / NCIMB 10442 / H16 / Stanier 337) (Ralstonia eutropha), this protein is Ribosomal RNA large subunit methyltransferase H.